Here is a 1191-residue protein sequence, read N- to C-terminus: DNA topoisomerase 2 (1191 aa).

ATP contacts are provided by residues Asn-64, Asn-95, and 142–149; that span reads GTNGVGLK. Positions 437, 538, and 540 each coordinate Mg(2+). One can recognise a Topo IIA-type catalytic domain in the interval 706–1173; it reads IPNFLDGMTR…PGASVWLEEI (468 aa). Residue Tyr-799 is the O-(5'-phospho-DNA)-tyrosine intermediate of the active site.

Belongs to the type II topoisomerase family. Mg(2+) serves as cofactor. Mn(2+) is required as a cofactor. It depends on Ca(2+) as a cofactor.

Its subcellular location is the host cytoplasm. It carries out the reaction ATP-dependent breakage, passage and rejoining of double-stranded DNA.. Its function is as follows. Type II topoisomerase. Processively relaxes supercoiled DNA. Displays DNA-supercoiling activity only when associated with the viral histone-like protein. The chain is DNA topoisomerase 2 from Ornithodoros (relapsing fever ticks).